Reading from the N-terminus, the 184-residue chain is UPF0398 protein BC_1561 (184 aa).

This sequence belongs to the UPF0398 family.

The polypeptide is UPF0398 protein BC_1561 (Bacillus cereus (strain ATCC 14579 / DSM 31 / CCUG 7414 / JCM 2152 / NBRC 15305 / NCIMB 9373 / NCTC 2599 / NRRL B-3711)).